A 450-amino-acid chain; its full sequence is Sorting nexin-4 (450 aa).

At Met1 the chain carries N-acetylmethionine. Positions 1–46 (MEQAPPDPEKLLQPGPLEPLGGPGAVLEAAVGEENEGTREDGSGVD) are disordered. Over residues 11-20 (LLQPGPLEPL) the composition is skewed to low complexity. One can recognise a PX domain in the interval 61 to 187 (SVSEAEKRTG…YSFLTQEGNW (127 aa)). Residues Arg106, Ser108, Lys132, and Arg154 each coordinate a 1,2-diacyl-sn-glycero-3-phospho-(1D-myo-inositol-3-phosphate).

The protein belongs to the sorting nexin family. As to quaternary structure, heterodimer; heterodimerizes with SNX7 or SNX30. Interacts with WWC1/KIBRA. Identified in a complex with WWC1/KIBRA and dynein components DYNLL1 and DYNC1I2. Interacts with BIN1.

It localises to the early endosome. Its subcellular location is the early endosome membrane. Its function is as follows. Involved in the regulation of endocytosis and in several stages of intracellular trafficking. Plays a role in recycling endocytosed transferrin receptor and prevent its degradation. Involved in autophagosome assembly by regulating trafficking and recycling of phospholipid scramblase ATG9A. This is Sorting nexin-4 from Mus musculus (Mouse).